Consider the following 332-residue polypeptide: Holliday junction branch migration complex subunit RuvB (332 aa).

A large ATPase domain (RuvB-L) region spans residues 1–181 (MSRILDNELM…FGITGHMEYY (181 aa)). ATP-binding positions include leucine 20, arginine 21, glycine 62, lysine 65, threonine 66, threonine 67, 128 to 130 (EDF), arginine 171, tyrosine 181, and arginine 218. A Mg(2+)-binding site is contributed by threonine 66. The tract at residues 182–252 (EAGDLTEIVE…ITDQALSMLD (71 aa)) is small ATPAse domain (RuvB-S). The head domain (RuvB-H) stretch occupies residues 255–332 (QEGLDYVDQK…EHLGYEYMKE (78 aa)). Positions 291, 310, 312, and 315 each coordinate DNA.

This sequence belongs to the RuvB family. Homohexamer. Forms an RuvA(8)-RuvB(12)-Holliday junction (HJ) complex. HJ DNA is sandwiched between 2 RuvA tetramers; dsDNA enters through RuvA and exits via RuvB. An RuvB hexamer assembles on each DNA strand where it exits the tetramer. Each RuvB hexamer is contacted by two RuvA subunits (via domain III) on 2 adjacent RuvB subunits; this complex drives branch migration. In the full resolvosome a probable DNA-RuvA(4)-RuvB(12)-RuvC(2) complex forms which resolves the HJ.

It is found in the cytoplasm. The catalysed reaction is ATP + H2O = ADP + phosphate + H(+). Functionally, the RuvA-RuvB-RuvC complex processes Holliday junction (HJ) DNA during genetic recombination and DNA repair, while the RuvA-RuvB complex plays an important role in the rescue of blocked DNA replication forks via replication fork reversal (RFR). RuvA specifically binds to HJ cruciform DNA, conferring on it an open structure. The RuvB hexamer acts as an ATP-dependent pump, pulling dsDNA into and through the RuvAB complex. RuvB forms 2 homohexamers on either side of HJ DNA bound by 1 or 2 RuvA tetramers; 4 subunits per hexamer contact DNA at a time. Coordinated motions by a converter formed by DNA-disengaged RuvB subunits stimulates ATP hydrolysis and nucleotide exchange. Immobilization of the converter enables RuvB to convert the ATP-contained energy into a lever motion, pulling 2 nucleotides of DNA out of the RuvA tetramer per ATP hydrolyzed, thus driving DNA branch migration. The RuvB motors rotate together with the DNA substrate, which together with the progressing nucleotide cycle form the mechanistic basis for DNA recombination by continuous HJ branch migration. Branch migration allows RuvC to scan DNA until it finds its consensus sequence, where it cleaves and resolves cruciform DNA. The protein is Holliday junction branch migration complex subunit RuvB of Streptococcus sanguinis (strain SK36).